A 91-amino-acid polypeptide reads, in one-letter code: Probable Fe(2+)-trafficking protein (91 aa).

It belongs to the Fe(2+)-trafficking protein family.

In terms of biological role, could be a mediator in iron transactions between iron acquisition and iron-requiring processes, such as synthesis and/or repair of Fe-S clusters in biosynthetic enzymes. The sequence is that of Probable Fe(2+)-trafficking protein from Burkholderia cenocepacia (strain ATCC BAA-245 / DSM 16553 / LMG 16656 / NCTC 13227 / J2315 / CF5610) (Burkholderia cepacia (strain J2315)).